Consider the following 361-residue polypeptide: Porphobilinogen deaminase (361 aa).

Serine 2 bears the N-acetylserine mark. Serine 69 carries the phosphoserine modification. An N6-acetyllysine modification is found at lysine 74. At serine 147 the chain carries Phosphoserine. Cysteine 261 is subject to S-(dipyrrolylmethanemethyl)cysteine.

It belongs to the HMBS family. Monomer. Requires dipyrromethane as cofactor.

It localises to the cytoplasm. The protein localises to the cytosol. The catalysed reaction is 4 porphobilinogen + H2O = hydroxymethylbilane + 4 NH4(+). It functions in the pathway porphyrin-containing compound metabolism; protoporphyrin-IX biosynthesis; coproporphyrinogen-III from 5-aminolevulinate: step 2/4. Functionally, as part of the heme biosynthetic pathway, catalyzes the sequential polymerization of four molecules of porphobilinogen to form hydroxymethylbilane, also known as preuroporphyrinogen. Catalysis begins with the assembly of the dipyrromethane cofactor by the apoenzyme from two molecules of porphobilinogen or from preuroporphyrinogen. The covalently linked cofactor acts as a primer, around which the tetrapyrrole product is assembled. In the last step of catalysis, the product, preuroporphyrinogen, is released, leaving the cofactor bound to the holodeaminase intact. This is Porphobilinogen deaminase (Hmbs) from Rattus norvegicus (Rat).